Consider the following 347-residue polypeptide: S-adenosylmethionine:tRNA ribosyltransferase-isomerase (347 aa).

It belongs to the QueA family. In terms of assembly, monomer.

Its subcellular location is the cytoplasm. The enzyme catalyses 7-aminomethyl-7-carbaguanosine(34) in tRNA + S-adenosyl-L-methionine = epoxyqueuosine(34) in tRNA + adenine + L-methionine + 2 H(+). It participates in tRNA modification; tRNA-queuosine biosynthesis. Its function is as follows. Transfers and isomerizes the ribose moiety from AdoMet to the 7-aminomethyl group of 7-deazaguanine (preQ1-tRNA) to give epoxyqueuosine (oQ-tRNA). The sequence is that of S-adenosylmethionine:tRNA ribosyltransferase-isomerase from Bordetella bronchiseptica (strain ATCC BAA-588 / NCTC 13252 / RB50) (Alcaligenes bronchisepticus).